Consider the following 289-residue polypeptide: 4-diphosphocytidyl-2-C-methyl-D-erythritol kinase (289 aa).

Residue Lys-11 is part of the active site. Residue 95 to 105 (PMGGGIGGGSS) coordinates ATP. Asp-137 is a catalytic residue.

This sequence belongs to the GHMP kinase family. IspE subfamily.

The enzyme catalyses 4-CDP-2-C-methyl-D-erythritol + ATP = 4-CDP-2-C-methyl-D-erythritol 2-phosphate + ADP + H(+). The protein operates within isoprenoid biosynthesis; isopentenyl diphosphate biosynthesis via DXP pathway; isopentenyl diphosphate from 1-deoxy-D-xylulose 5-phosphate: step 3/6. In terms of biological role, catalyzes the phosphorylation of the position 2 hydroxy group of 4-diphosphocytidyl-2C-methyl-D-erythritol. The protein is 4-diphosphocytidyl-2-C-methyl-D-erythritol kinase of Aeromonas hydrophila subsp. hydrophila (strain ATCC 7966 / DSM 30187 / BCRC 13018 / CCUG 14551 / JCM 1027 / KCTC 2358 / NCIMB 9240 / NCTC 8049).